The chain runs to 88 residues: UPF0250 protein PM1928 (88 aa).

This sequence belongs to the UPF0250 family.

The protein is UPF0250 protein PM1928 of Pasteurella multocida (strain Pm70).